We begin with the raw amino-acid sequence, 427 residues long: Membrane-bound hydrogenase subunit alpha (427 aa).

The Ni(2+) site is built by C68, C71, C374, and C377.

The protein belongs to the complex I 49 kDa subunit family. As to quaternary structure, the membrane-bound hydrogenase complex is composed of MbhK and MbhL, and may also contain MbhJ. Requires Ni(2+) as cofactor.

It is found in the cell membrane. The enzyme catalyses H2 + 2 oxidized [2Fe-2S]-[ferredoxin] = 2 reduced [2Fe-2S]-[ferredoxin] + 2 H(+). Its activity is regulated as follows. Inhibited by 0.1 mM Cu(2+). Functionally, alpha subunit of a hydrogen-evolving hydrogenase that utilizes protons both as a substrate for hydrogen production and proton translocation. Acts by coupling the redox reaction via ferredoxin and iron-sulfur (Fe-S) clusters to proton translocation across the membrane thereby conserving the redox energy in a proton gradient. This is Membrane-bound hydrogenase subunit alpha from Pyrococcus furiosus (strain ATCC 43587 / DSM 3638 / JCM 8422 / Vc1).